The chain runs to 654 residues: tRNA 5-methylaminomethyl-2-thiouridine biosynthesis bifunctional protein MnmC (654 aa).

The interval Met1 to Gln235 is tRNA (mnm(5)s(2)U34)-methyltransferase. Residues Val261–Gly654 form an FAD-dependent cmnm(5)s(2)U34 oxidoreductase region.

In the N-terminal section; belongs to the methyltransferase superfamily. tRNA (mnm(5)s(2)U34)-methyltransferase family. The protein in the C-terminal section; belongs to the DAO family. The cofactor is FAD.

It is found in the cytoplasm. It carries out the reaction 5-aminomethyl-2-thiouridine(34) in tRNA + S-adenosyl-L-methionine = 5-methylaminomethyl-2-thiouridine(34) in tRNA + S-adenosyl-L-homocysteine + H(+). Catalyzes the last two steps in the biosynthesis of 5-methylaminomethyl-2-thiouridine (mnm(5)s(2)U) at the wobble position (U34) in tRNA. Catalyzes the FAD-dependent demodification of cmnm(5)s(2)U34 to nm(5)s(2)U34, followed by the transfer of a methyl group from S-adenosyl-L-methionine to nm(5)s(2)U34, to form mnm(5)s(2)U34. The sequence is that of tRNA 5-methylaminomethyl-2-thiouridine biosynthesis bifunctional protein MnmC from Pseudomonas aeruginosa (strain ATCC 15692 / DSM 22644 / CIP 104116 / JCM 14847 / LMG 12228 / 1C / PRS 101 / PAO1).